The following is a 374-amino-acid chain: SKP1-interacting partner 15 (374 aa).

The region spanning 3–48 (SSPVNCLPPDSLHQIFSSLPIRDIMICRSVCKFFNQLLTSQCFIEI) is the F-box domain.

As to quaternary structure, part of a SCF (ASK-cullin-F-box) protein ligase complex. Interacts with SKP1A/ASK1, SKP1B/ASK2, ASK11 and ASK13.

Its subcellular location is the nucleus. It functions in the pathway protein modification; protein ubiquitination. Functionally, component of SCF(ASK-cullin-F-box) E3 ubiquitin ligase complexes, which may mediate the ubiquitination and subsequent proteasomal degradation of target proteins. In Arabidopsis thaliana (Mouse-ear cress), this protein is SKP1-interacting partner 15 (SKIP15).